The sequence spans 125 residues: Type II secretion system protein I (125 aa).

The propeptide at 1–5 is leader sequence; the sequence is MKQQG. Methionine 6 bears the N-methylmethionine mark. A helical membrane pass occupies residues 6 to 26; sequence MTLLEVMVALVIFALAGLTVL.

The protein belongs to the GSP I family. In terms of assembly, type II secretion is composed of four main components: the outer membrane complex, the inner membrane complex, the cytoplasmic secretion ATPase and the periplasm-spanning pseudopilus. Interacts with core component OutG. Cleaved by prepilin peptidase. In terms of processing, methylated by prepilin peptidase at the amino group of the N-terminal methionine once the leader sequence is cleaved by prepilin peptidase.

It is found in the cell inner membrane. Component of the type II secretion system required for the energy-dependent secretion of extracellular factors such as proteases and toxins from the periplasm. Part of the pseudopilus tip complex that is critical for the recognition and binding of secretion substrates. The protein is Type II secretion system protein I (outI) of Dickeya chrysanthemi (Pectobacterium chrysanthemi).